The chain runs to 427 residues: Adenylosuccinate synthetase (427 aa).

GTP-binding positions include 12 to 18 and 40 to 42; these read GDEGKGK and GHT. The active-site Proton acceptor is the D13. The Mg(2+) site is built by D13 and G40. IMP contacts are provided by residues 13 to 16, 38 to 41, T127, R141, Q222, T237, and R301; these read DEGK and NAGH. The Proton donor role is filled by H41. 297 to 303 is a binding site for substrate; sequence VVTKRPR. GTP is bound by residues R303, 329–331, and 411–413; these read SLD and AVG.

It belongs to the adenylosuccinate synthetase family. As to quaternary structure, homodimer. It depends on Mg(2+) as a cofactor.

It is found in the cytoplasm. The catalysed reaction is IMP + L-aspartate + GTP = N(6)-(1,2-dicarboxyethyl)-AMP + GDP + phosphate + 2 H(+). It functions in the pathway purine metabolism; AMP biosynthesis via de novo pathway; AMP from IMP: step 1/2. In terms of biological role, plays an important role in the de novo pathway of purine nucleotide biosynthesis. Catalyzes the first committed step in the biosynthesis of AMP from IMP. This is Adenylosuccinate synthetase from Leuconostoc mesenteroides subsp. mesenteroides (strain ATCC 8293 / DSM 20343 / BCRC 11652 / CCM 1803 / JCM 6124 / NCDO 523 / NBRC 100496 / NCIMB 8023 / NCTC 12954 / NRRL B-1118 / 37Y).